The chain runs to 102 residues: Integration host factor subunit alpha (102 aa).

Belongs to the bacterial histone-like protein family. In terms of assembly, heterodimer of an alpha and a beta chain.

Functionally, this protein is one of the two subunits of integration host factor, a specific DNA-binding protein that functions in genetic recombination as well as in transcriptional and translational control. This is Integration host factor subunit alpha from Buchnera aphidicola subsp. Acyrthosiphon pisum (strain 5A).